We begin with the raw amino-acid sequence, 553 residues long: ATP synthase subunit alpha (553 aa).

Residue 173–180 (GDRQTGKT) participates in ATP binding. A disordered region spans residues 527-553 (EALDPSAVEREEIAVHHRKPSDETAGH). Basic and acidic residues predominate over residues 533-553 (AVEREEIAVHHRKPSDETAGH).

Belongs to the ATPase alpha/beta chains family. F-type ATPases have 2 components, CF(1) - the catalytic core - and CF(0) - the membrane proton channel. CF(1) has five subunits: alpha(3), beta(3), gamma(1), delta(1), epsilon(1). CF(0) has three main subunits: a(1), b(2) and c(9-12). The alpha and beta chains form an alternating ring which encloses part of the gamma chain. CF(1) is attached to CF(0) by a central stalk formed by the gamma and epsilon chains, while a peripheral stalk is formed by the delta and b chains.

Its subcellular location is the cell membrane. It catalyses the reaction ATP + H2O + 4 H(+)(in) = ADP + phosphate + 5 H(+)(out). Its function is as follows. Produces ATP from ADP in the presence of a proton gradient across the membrane. The alpha chain is a regulatory subunit. This Parafrankia sp. (strain EAN1pec) protein is ATP synthase subunit alpha.